The sequence spans 156 residues: Peptide methionine sulfoxide reductase MsrA (156 aa).

Cys-10 is a catalytic residue.

Belongs to the MsrA Met sulfoxide reductase family.

It carries out the reaction L-methionyl-[protein] + [thioredoxin]-disulfide + H2O = L-methionyl-(S)-S-oxide-[protein] + [thioredoxin]-dithiol. It catalyses the reaction [thioredoxin]-disulfide + L-methionine + H2O = L-methionine (S)-S-oxide + [thioredoxin]-dithiol. Functionally, has an important function as a repair enzyme for proteins that have been inactivated by oxidation. Catalyzes the reversible oxidation-reduction of methionine sulfoxide in proteins to methionine. The chain is Peptide methionine sulfoxide reductase MsrA from Acidobacterium capsulatum (strain ATCC 51196 / DSM 11244 / BCRC 80197 / JCM 7670 / NBRC 15755 / NCIMB 13165 / 161).